We begin with the raw amino-acid sequence, 264 residues long: S-adenosylmethionine decarboxylase proenzyme (264 aa).

The Schiff-base intermediate with substrate; via pyruvic acid role is filled by Ser112. Ser112 is modified (pyruvic acid (Ser); by autocatalysis). The Proton acceptor; for processing activity role is filled by His117. Cys140 (proton donor; for catalytic activity) is an active-site residue.

Belongs to the prokaryotic AdoMetDC family. Type 2 subfamily. As to quaternary structure, heterooctamer of four alpha and four beta chains arranged as a tetramer of alpha/beta heterodimers. Pyruvate is required as a cofactor. Is synthesized initially as an inactive proenzyme. Formation of the active enzyme involves a self-maturation process in which the active site pyruvoyl group is generated from an internal serine residue via an autocatalytic post-translational modification. Two non-identical subunits are generated from the proenzyme in this reaction, and the pyruvate is formed at the N-terminus of the alpha chain, which is derived from the carboxyl end of the proenzyme. The post-translation cleavage follows an unusual pathway, termed non-hydrolytic serinolysis, in which the side chain hydroxyl group of the serine supplies its oxygen atom to form the C-terminus of the beta chain, while the remainder of the serine residue undergoes an oxidative deamination to produce ammonia and the pyruvoyl group blocking the N-terminus of the alpha chain.

It carries out the reaction S-adenosyl-L-methionine + H(+) = S-adenosyl 3-(methylsulfanyl)propylamine + CO2. The protein operates within amine and polyamine biosynthesis; S-adenosylmethioninamine biosynthesis; S-adenosylmethioninamine from S-adenosyl-L-methionine: step 1/1. Catalyzes the decarboxylation of S-adenosylmethionine to S-adenosylmethioninamine (dcAdoMet), the propylamine donor required for the synthesis of the polyamines spermine and spermidine from the diamine putrescine. The polypeptide is S-adenosylmethionine decarboxylase proenzyme (Yersinia pseudotuberculosis serotype O:1b (strain IP 31758)).